Consider the following 418-residue polypeptide: Queuine tRNA-ribosyltransferase accessory subunit 2 (418 aa).

Zn(2+)-binding residues include cysteine 325, cysteine 327, cysteine 330, and histidine 356.

The protein belongs to the queuine tRNA-ribosyltransferase family. QTRT2 subfamily. Heterodimer of a catalytic subunit and an accessory subunit. The cofactor is Zn(2+).

Its subcellular location is the cytoplasm. In terms of biological role, non-catalytic subunit of the queuine tRNA-ribosyltransferase (TGT) that catalyzes the base-exchange of a guanine (G) residue with queuine (Q) at position 34 (anticodon wobble position) in tRNAs with GU(N) anticodons (tRNA-Asp, -Asn, -His and -Tyr), resulting in the hypermodified nucleoside queuosine (7-(((4,5-cis-dihydroxy-2-cyclopenten-1-yl)amino)methyl)-7-deazaguanosine). This chain is Queuine tRNA-ribosyltransferase accessory subunit 2, found in Drosophila yakuba (Fruit fly).